The chain runs to 361 residues: Histidinol-phosphate aminotransferase (361 aa).

Residue Lys218 is modified to N6-(pyridoxal phosphate)lysine.

This sequence belongs to the class-II pyridoxal-phosphate-dependent aminotransferase family. Histidinol-phosphate aminotransferase subfamily. As to quaternary structure, homodimer. Pyridoxal 5'-phosphate is required as a cofactor.

It carries out the reaction L-histidinol phosphate + 2-oxoglutarate = 3-(imidazol-4-yl)-2-oxopropyl phosphate + L-glutamate. It functions in the pathway amino-acid biosynthesis; L-histidine biosynthesis; L-histidine from 5-phospho-alpha-D-ribose 1-diphosphate: step 7/9. This Dinoroseobacter shibae (strain DSM 16493 / NCIMB 14021 / DFL 12) protein is Histidinol-phosphate aminotransferase.